A 302-amino-acid polypeptide reads, in one-letter code: Melibiose operon regulatory protein (302 aa).

In terms of domain architecture, HTH araC/xylS-type spans 194–292 (SQMLGFIAEN…GMSPQQYRKL (99 aa)). 2 DNA-binding regions (H-T-H motif) span residues 211–232 (NDVA…QRVM) and 259–282 (ILDI…GKYV).

Transcription activator for the expression of the melAB operon. MelR binds at two sites located upstream of the melAB transcription site. This Escherichia coli O6:H1 (strain CFT073 / ATCC 700928 / UPEC) protein is Melibiose operon regulatory protein (melR).